The chain runs to 400 residues: Putative zinc-binding protein ORF78 (400 aa).

The segment at 9 to 33 (LPRKRRAVAQPRTRQPPPKVHREDT) is disordered.

The polypeptide is Putative zinc-binding protein ORF78 (ORF78) (Ictalurid herpesvirus 1 (strain Auburn) (IcHV-1)).